Reading from the N-terminus, the 259-residue chain is Major cell-binding factor (259 aa).

Residues 1–26 (MVFRKSLLKLAVFALGACVAFSNANA) form the signal peptide.

The protein belongs to the bacterial solute-binding protein 3 family.

Its subcellular location is the cell surface. Its function is as follows. Common antigen and a major cell adherence molecule. Most probably involved, with PEB1C, in a binding-protein-dependent transport system for an amino acid. May be involved in binding to intestinal cells. The polypeptide is Major cell-binding factor (peb1A) (Campylobacter jejuni subsp. jejuni serotype O:23/36 (strain 81-176)).